We begin with the raw amino-acid sequence, 1381 residues long: Hepatocyte growth factor receptor (1381 aa).

An N-terminal signal peptide occupies residues 1–24 (MKAPAVLVPGILVLLFTLVQRSNG). Over 25–932 (ECKEALAKSE…VIVQPDQNFT (908 aa)) the chain is Extracellular. Positions 27–515 (KEALAKSEMN…TGKKITKIPL (489 aa)) constitute a Sema domain. The N-linked (GlcNAc...) asparagine glycan is linked to Asn-45. Intrachain disulfides connect Cys-95/Cys-101, Cys-98/Cys-160, Cys-133/Cys-141, and Cys-172/Cys-175. Asn-106 carries an N-linked (GlcNAc...) asparagine glycan. Asn-149 is a glycosylation site (N-linked (GlcNAc...) asparagine). N-linked (GlcNAc...) asparagine glycosylation is present at Asn-202. 2 disulfide bridges follow: Cys-298–Cys-363 and Cys-385–Cys-397. N-linked (GlcNAc...) asparagine glycosylation is found at Asn-399 and Asn-405. 4 disulfide bridges follow: Cys-520/Cys-538, Cys-526/Cys-561, Cys-529/Cys-545, and Cys-541/Cys-551. IPT/TIG domains follow at residues 563–655 (PAIY…FSYV), 657–739 (PIIT…FSYR), and 742–836 (PIVY…LIYV). Thr-582 carries O-linked (Man) threonine glycosylation. Residues Asn-607 and Asn-635 are each glycosylated (N-linked (GlcNAc...) asparagine). Thr-676 and Thr-761 each carry an O-linked (Man) threonine glycan. N-linked (GlcNAc...) asparagine glycans are attached at residues Asn-785, Asn-879, and Asn-930. The helical transmembrane segment at 933 to 955 (GLIAGVVSISIALLLLLGLFLWL) threads the bilayer. Topologically, residues 956–1381 (KKRKQIKDLG…EDNADDEVDT (426 aa)) are cytoplasmic. Phosphoserine is present on Ser-966. Residue Thr-977 is modified to Phosphothreonine. A phosphoserine mark is found at Ser-990, Ser-997, and Ser-1000. Position 1003 is a phosphotyrosine (Tyr-1003). A Protein kinase domain is found at 1078–1345 (VHFNEVIGRG…RISAIFSTFI (268 aa)). ATP is bound by residues 1084 to 1092 (IGRGHFGCV) and Lys-1110. Asp-1204 functions as the Proton acceptor in the catalytic mechanism. The interaction with RANBP9 stretch occupies residues 1212-1381 (LDEKFTVKVA…EDNADDEVDT (170 aa)). At Tyr-1230 the chain carries Phosphotyrosine. A phosphotyrosine; by autocatalysis mark is found at Tyr-1234 and Tyr-1235. Thr-1289 carries the phosphothreonine modification. The segment at 1320-1359 (WHPKAEMRPSFSELVSRISAIFSTFIGEHYVHVNATYVNV) is interaction with MUC20. Phosphotyrosine; by autocatalysis occurs at positions 1349 and 1356. Tyr-1365 bears the Phosphotyrosine mark.

It belongs to the protein kinase superfamily. Tyr protein kinase family. As to quaternary structure, heterodimer made of an alpha chain (50 kDa) and a beta chain (145 kDa) which are disulfide linked. Binds PLXNB1. Interacts when phosphorylated with downstream effectors including STAT3, PIK3R1, SRC, PCLG1, GRB2 and GAB1. Interacts with SPSB1, SPSB2 and SPSB4. Interacts with INPP5D/SHIP1. When phosphorylated at Tyr-1356, interacts with INPPL1/SHIP2. Interacts with RANBP9 and RANBP10, as well as SPSB1, SPSB2, SPSB3 and SPSB4. SPSB1 binding occurs in the presence and in the absence of HGF, however HGF treatment has a positive effect on this interaction. Interacts with MUC20; prevents interaction with GRB2 and suppresses hepatocyte growth factor-induced cell proliferation. Interacts with GRB10. Interacts with PTPN1 and PTPN2. Interacts with HSP90AA1 and HSP90AB1; the interaction suppresses MET kinase activity. Interacts with tensin TNS3. Interacts (when phosphorylated) with tensin TNS4 (via SH2 domain); the interaction increases MET protein stability by inhibiting MET endocytosis and subsequent lysosomal degradation. Autophosphorylated in response to ligand binding on Tyr-1234 and Tyr-1235 in the kinase domain leading to further phosphorylation of Tyr-1349 and Tyr-1356 in the C-terminal multifunctional docking site. Dephosphorylated by PTPRJ at Tyr-1349 and Tyr-1365. Dephosphorylated by PTPN1 and PTPN2. In terms of processing, ubiquitinated. Ubiquitination by CBL regulates the receptor stability and activity through proteasomal degradation. Post-translationally, O-mannosylation of IPT/TIG domains by TMEM260 is required for protein maturation. O-mannosylated residues are composed of single mannose glycans that are not elongated or modified.

It is found in the membrane. It catalyses the reaction L-tyrosyl-[protein] + ATP = O-phospho-L-tyrosyl-[protein] + ADP + H(+). In its inactive state, the C-terminal tail interacts with the catalytic domain and inhibits the kinase activity. Upon ligand binding, the C-terminal tail is displaced and becomes phosphorylated, thus increasing the kinase activity. Receptor tyrosine kinase that transduces signals from the extracellular matrix into the cytoplasm by binding to hepatocyte growth factor/HGF ligand. Regulates many physiological processes including proliferation, scattering, morphogenesis and survival. Ligand binding at the cell surface induces autophosphorylation of MET on its intracellular domain that provides docking sites for downstream signaling molecules. Following activation by ligand, interacts with the PI3-kinase subunit PIK3R1, PLCG1, SRC, GRB2, STAT3 or the adapter GAB1. Recruitment of these downstream effectors by MET leads to the activation of several signaling cascades including the RAS-ERK, PI3 kinase-AKT, or PLCgamma-PKC. The RAS-ERK activation is associated with the morphogenetic effects while PI3K/AKT coordinates prosurvival effects. During embryonic development, MET signaling plays a role in gastrulation, development and migration of muscles and neuronal precursors, angiogenesis and kidney formation. In adults, participates in wound healing as well as organ regeneration and tissue remodeling. Also promotes differentiation and proliferation of hematopoietic cells. This Papio anubis (Olive baboon) protein is Hepatocyte growth factor receptor (MET).